A 143-amino-acid chain; its full sequence is Large ribosomal subunit protein mL51 (143 aa).

The transit peptide at 1–52 (MAALVRGLMRRVAALPQAVRSVSGGGQRHEPYRPLPITSPLAGLPRNFRVRE) directs the protein to the mitochondrion.

The protein belongs to the mitochondrion-specific ribosomal protein mL51 family. As to quaternary structure, component of the mitochondrial ribosome large subunit (39S) which comprises a 16S rRNA and about 50 distinct proteins.

It localises to the mitochondrion. This chain is Large ribosomal subunit protein mL51 (MRPL51), found in Gallus gallus (Chicken).